Reading from the N-terminus, the 145-residue chain is Small ribosomal subunit protein uS12 (145 aa).

This sequence belongs to the universal ribosomal protein uS12 family. In terms of assembly, part of the 30S ribosomal subunit.

Its function is as follows. With S4 and S5 plays an important role in translational accuracy. Located at the interface of the 30S and 50S subunits. This is Small ribosomal subunit protein uS12 from Cenarchaeum symbiosum (strain A).